Reading from the N-terminus, the 59-residue chain is Alpha-conotoxin CIA (59 aa).

Residues 1-16 (MFTVFLLVVLTITVVS) form the signal peptide. A propeptide spanning residues 17-42 (FPSDRASDGRDDEAKDERSDMYKSKR) is cleaved from the precursor. Cystine bridges form between cysteine 46-cysteine 51 and cysteine 47-cysteine 57. Cysteine 57 carries the post-translational modification Cysteine amide.

It belongs to the conotoxin A superfamily. As to expression, expressed by the venom duct.

The protein resides in the secreted. In terms of biological role, alpha-conotoxins act on postsynaptic membranes, they bind to the nicotinic acetylcholine receptors (nAChR) and thus inhibit them. This toxin blocks the rat muscle nAChRs alpha-1-beta-1-gamma-delta (CHRNA1-CHRNB1-CHRNG-CHRND) (IC(50)=5.7 nM) and the rat neuronal nAChR alpha-3-beta-2/CHRNA3-CHRNB2 (IC(50)=2060 nM). In vivo, intramuscular injection into zebrafish produces rapid flaccid paralysis. The sequence is that of Alpha-conotoxin CIA from Conus catus (Cat cone).